The following is a 606-amino-acid chain: Armadillo repeat-containing X-linked protein 5 (606 aa).

Residues 1–85 (MIGSKTKRKA…KVKKKKDKTN (85 aa)) are disordered. The segment covering 15–26 (GASSKPGTNSPA) has biased composition (polar residues). The segment covering 40–59 (VKAEPKEEWGNQAEARDEAV) has biased composition (basic and acidic residues). 4 ARM repeats span residues 349-388 (CKSR…GISP), 470-509 (VKFD…CLSK), 511-551 (QANT…NINF), and 568-606 (SELI…ILKL).

It belongs to the eutherian X-chromosome-specific Armcx family. Highly expressed in the developing neural tissues, neural crest derivatives and hind limbs.

The chain is Armadillo repeat-containing X-linked protein 5 (Armcx5) from Mus musculus (Mouse).